The primary structure comprises 446 residues: Argininosuccinate synthase (446 aa).

ATP is bound by residues 17 to 25 (AFSGGLDTS) and Ala43. Tyr99 provides a ligand contact to L-citrulline. ATP contacts are provided by Gly129 and Thr131. Thr131, Asn135, and Asp136 together coordinate L-aspartate. Residue Asn135 participates in L-citrulline binding. Asp136 contributes to the ATP binding site. Positions 139 and 192 each coordinate L-citrulline. Residue Asp194 coordinates ATP. Residues Thr201, Glu203, and Glu280 each coordinate L-citrulline.

Belongs to the argininosuccinate synthase family. Type 2 subfamily. As to quaternary structure, homotetramer.

It localises to the cytoplasm. It catalyses the reaction L-citrulline + L-aspartate + ATP = 2-(N(omega)-L-arginino)succinate + AMP + diphosphate + H(+). The protein operates within amino-acid biosynthesis; L-arginine biosynthesis; L-arginine from L-ornithine and carbamoyl phosphate: step 2/3. The sequence is that of Argininosuccinate synthase from Variovorax paradoxus (strain S110).